The primary structure comprises 340 residues: Protein arginine N-methyltransferase 6 (340 aa).

The SAM-dependent MTase PRMT-type domain maps to 15 to 321; the sequence is DCEYFQCYSD…DINPRHLRVL (307 aa). Residues His28, Arg37, Gly61, Glu83, and Glu112 each coordinate S-adenosyl-L-methionine. Residues Glu126 and Glu135 contribute to the active site.

It belongs to the class I-like SAM-binding methyltransferase superfamily. Protein arginine N-methyltransferase family. PRMT6 subfamily.

The protein localises to the nucleus. The enzyme catalyses L-arginyl-[protein] + 2 S-adenosyl-L-methionine = N(omega),N(omega)-dimethyl-L-arginyl-[protein] + 2 S-adenosyl-L-homocysteine + 2 H(+). Arginine methyltransferase that can catalyze the formation of both omega-N monomethylarginine (MMA) and asymmetrical dimethylarginine (aDMA), with a strong preference for the formation of aDMA. Preferentially methylates arginyl residues present in a glycine and arginine-rich domain and displays preference for monomethylated substrates. Specifically mediates the asymmetric dimethylation of histone H3 'Arg-2' to form H3R2me2a. H3R2me2a represents a specific tag for epigenetic transcriptional repression and is mutually exclusive with methylation on histone H3 'Lys-4' (H3K4me2 and H3K4me3). Acts as a transcriptional repressor of various genes such as HOXA2, THBS1 and TP53. Repression of TP53 blocks cellular senescence. Also methylates histone H2A and H4 'Arg-3' (H2AR3me and H4R3me, respectively). Acts as a regulator of DNA base excision during DNA repair by mediating the methylation of DNA polymerase beta (POLB), leading to the stimulation of its polymerase activity by enhancing DNA binding and processivity. Methylates HMGA1. Regulates alternative splicing events. Acts as a transcriptional coactivator of a number of steroid hormone receptors including ESR1, ESR2, PGR and NR3C1. The sequence is that of Protein arginine N-methyltransferase 6 (prmt6) from Xenopus tropicalis (Western clawed frog).